Reading from the N-terminus, the 385-residue chain is Flap endonuclease 1 (385 aa).

Positions 1 to 104 (MGILGLSKLI…GELAKRAERR (104 aa)) are N-domain. Asp-34 is a binding site for Mg(2+). Residues Arg-47 and Arg-70 each contribute to the DNA site. 5 residues coordinate Mg(2+): Asp-86, Glu-158, Glu-160, Asp-179, and Asp-181. Residues 122–253 (GIEKFNRRLV…KRAIELINTY (132 aa)) form an I-domain region. Glu-158 lines the DNA pocket. DNA is bound by residues Gly-231 and Asp-233. Residue Asp-233 coordinates Mg(2+). Residues 336–344 (TQVRLDSFF) are interaction with PCNA. The tract at residues 346 to 385 (TLPSTPNATNAAKRKAEEAKKSANNKKAKTSGGGRGRRPK) is disordered. Basic residues predominate over residues 368–385 (ANNKKAKTSGGGRGRRPK).

Belongs to the XPG/RAD2 endonuclease family. FEN1 subfamily. Interacts with PCNA. Three molecules of FEN1 bind to one PCNA trimer with each molecule binding to one PCNA monomer. PCNA stimulates the nuclease activity without altering cleavage specificity. Requires Mg(2+) as cofactor. In terms of processing, phosphorylated. Phosphorylation upon DNA damage induces relocalization to the nuclear plasma.

It localises to the nucleus. It is found in the nucleolus. The protein resides in the nucleoplasm. Its subcellular location is the mitochondrion. Functionally, structure-specific nuclease with 5'-flap endonuclease and 5'-3' exonuclease activities involved in DNA replication and repair. During DNA replication, cleaves the 5'-overhanging flap structure that is generated by displacement synthesis when DNA polymerase encounters the 5'-end of a downstream Okazaki fragment. It enters the flap from the 5'-end and then tracks to cleave the flap base, leaving a nick for ligation. Also involved in the long patch base excision repair (LP-BER) pathway, by cleaving within the apurinic/apyrimidinic (AP) site-terminated flap. Acts as a genome stabilization factor that prevents flaps from equilibrating into structures that lead to duplications and deletions. Also possesses 5'-3' exonuclease activity on nicked or gapped double-stranded DNA, and exhibits RNase H activity. Also involved in replication and repair of rDNA and in repairing mitochondrial DNA. The chain is Flap endonuclease 1 from Drosophila simulans (Fruit fly).